Consider the following 429-residue polypeptide: 3-phosphoshikimate 1-carboxyvinyltransferase (429 aa).

3 residues coordinate 3-phosphoshikimate: Lys-23, Ser-24, and Arg-28. Lys-23 is a binding site for phosphoenolpyruvate. Residues Gly-95 and Arg-123 each coordinate phosphoenolpyruvate. Ser-168, Gln-170, Asp-316, and Lys-343 together coordinate 3-phosphoshikimate. Gln-170 is a binding site for phosphoenolpyruvate. Asp-316 (proton acceptor) is an active-site residue. Residues Arg-347 and Arg-389 each coordinate phosphoenolpyruvate.

It belongs to the EPSP synthase family. In terms of assembly, monomer.

The protein localises to the cytoplasm. It catalyses the reaction 3-phosphoshikimate + phosphoenolpyruvate = 5-O-(1-carboxyvinyl)-3-phosphoshikimate + phosphate. It functions in the pathway metabolic intermediate biosynthesis; chorismate biosynthesis; chorismate from D-erythrose 4-phosphate and phosphoenolpyruvate: step 6/7. Catalyzes the transfer of the enolpyruvyl moiety of phosphoenolpyruvate (PEP) to the 5-hydroxyl of shikimate-3-phosphate (S3P) to produce enolpyruvyl shikimate-3-phosphate and inorganic phosphate. The protein is 3-phosphoshikimate 1-carboxyvinyltransferase of Bacillus cereus (strain AH187).